The chain runs to 236 residues: 2,3,4,5-tetrahydropyridine-2,6-dicarboxylate N-acetyltransferase (236 aa).

It belongs to the transferase hexapeptide repeat family. DapH subfamily.

It carries out the reaction (S)-2,3,4,5-tetrahydrodipicolinate + acetyl-CoA + H2O = L-2-acetamido-6-oxoheptanedioate + CoA. It functions in the pathway amino-acid biosynthesis; L-lysine biosynthesis via DAP pathway; LL-2,6-diaminopimelate from (S)-tetrahydrodipicolinate (acetylase route): step 1/3. Its function is as follows. Catalyzes the transfer of an acetyl group from acetyl-CoA to tetrahydrodipicolinate. This Bacillus pumilus (strain SAFR-032) protein is 2,3,4,5-tetrahydropyridine-2,6-dicarboxylate N-acetyltransferase.